Consider the following 305-residue polypeptide: Polyamine aminopropyltransferase 2 (305 aa).

The PABS domain maps to 7-242 (WRFVAEWTSE…GLWGFVAASD (236 aa)). Gln36 contacts S-methyl-5'-thioadenosine. The spermidine site is built by His67 and Glu91. S-methyl-5'-thioadenosine-binding positions include Asp111 and 143–144 (DG). Asp161 acts as the Proton acceptor in catalysis. S-methyl-5'-thioadenosine is bound at residue Pro170.

This sequence belongs to the spermidine/spermine synthase family. As to quaternary structure, homodimer or homotetramer.

It is found in the cytoplasm. The catalysed reaction is S-adenosyl 3-(methylsulfanyl)propylamine + propane-1,3-diamine = norspermidine + S-methyl-5'-thioadenosine + H(+). Its function is as follows. Involved in the biosynthesis of polyamines which are thought to support the growth of thermophilic microorganisms under high-temperature conditions. It seems that long-chain and branched-chain of polyamines effectively stabilize DNA and RNA, respectively. Catalyzes the irreversible transfer of a propylamine group from the amino donor S-adenosylmethioninamine (decarboxy-AdoMet) to 1,3-diaminopropane to yield sym-norspermidine (bis(3-aminopropyl)amine). It can also synthesize thermospermine from spermidine with a very low activity. The chain is Polyamine aminopropyltransferase 2 from Hyperthermus butylicus (strain DSM 5456 / JCM 9403 / PLM1-5).